Here is a 377-residue protein sequence, read N- to C-terminus: Nitric oxide reductase FlRd-NAD(+) reductase (377 aa).

It belongs to the FAD-dependent oxidoreductase family. It depends on FAD as a cofactor.

It localises to the cytoplasm. It carries out the reaction 2 reduced [nitric oxide reductase rubredoxin domain] + NAD(+) + H(+) = 2 oxidized [nitric oxide reductase rubredoxin domain] + NADH. Its pathway is nitrogen metabolism; nitric oxide reduction. Its function is as follows. One of at least two accessory proteins for anaerobic nitric oxide (NO) reductase. Reduces the rubredoxin moiety of NO reductase. This Escherichia coli O127:H6 (strain E2348/69 / EPEC) protein is Nitric oxide reductase FlRd-NAD(+) reductase.